A 347-amino-acid chain; its full sequence is Homocysteine S-methyltransferase 3 (347 aa).

The Hcy-binding domain occupies 12–333; sequence LMTDFLEKCG…NTIRAIAKVL (322 aa). Residues Cys-251, Cys-318, and Cys-319 each coordinate Zn(2+).

In terms of assembly, monomer. The cofactor is Zn(2+). Expressed predominantly in rosette leaves. Expressed in roots, cauline leaves and developing seeds.

It catalyses the reaction S-methyl-L-methionine + L-homocysteine = 2 L-methionine + H(+). Its function is as follows. Catalyzes methyl transfer from S-methylmethionine (SMM) to adenosyl-L-homocysteine (AdoMet). SMM degradation (by HMT-1, HMT-2 and HMT-3) and biosynthesis (by MMT1) constitute the SMM cycle in plants, which is probably required to achieve short term control of AdoMet level. This is Homocysteine S-methyltransferase 3 (HMT3) from Arabidopsis thaliana (Mouse-ear cress).